A 168-amino-acid chain; its full sequence is RNA annealing protein YRA2 (168 aa).

Positions 40 to 114 (FRLKITNIGL…KSIQVTLLDQ (75 aa)) constitute an RRM domain. A disordered region spans residues 113–152 (DQQKRKRDADQERRKLRHGPRGGYGSHYTKSQKPIEQRNK).

It belongs to the YRA1 family. Associates with mRNPs.

The protein localises to the nucleus. Involved in export of poly(A) mRNAs from the nucleus. Recruited to the coding sequences as well as poly-A sites of active genes. The polypeptide is RNA annealing protein YRA2 (YRA2) (Candida glabrata (strain ATCC 2001 / BCRC 20586 / JCM 3761 / NBRC 0622 / NRRL Y-65 / CBS 138) (Yeast)).